An 89-amino-acid chain; its full sequence is Protein WFDC9 (89 aa).

The N-terminal stretch at 1–23 (MKPWILLLVMFISGVVMLLPVLG) is a signal peptide.

It is found in the secreted. The protein is Protein WFDC9 (WFDC9) of Homo sapiens (Human).